The sequence spans 155 residues: SsrA-binding protein (155 aa).

The protein belongs to the SmpB family.

Its subcellular location is the cytoplasm. In terms of biological role, required for rescue of stalled ribosomes mediated by trans-translation. Binds to transfer-messenger RNA (tmRNA), required for stable association of tmRNA with ribosomes. tmRNA and SmpB together mimic tRNA shape, replacing the anticodon stem-loop with SmpB. tmRNA is encoded by the ssrA gene; the 2 termini fold to resemble tRNA(Ala) and it encodes a 'tag peptide', a short internal open reading frame. During trans-translation Ala-aminoacylated tmRNA acts like a tRNA, entering the A-site of stalled ribosomes, displacing the stalled mRNA. The ribosome then switches to translate the ORF on the tmRNA; the nascent peptide is terminated with the 'tag peptide' encoded by the tmRNA and targeted for degradation. The ribosome is freed to recommence translation, which seems to be the essential function of trans-translation. The protein is SsrA-binding protein of Halothermothrix orenii (strain H 168 / OCM 544 / DSM 9562).